Consider the following 875-residue polypeptide: MSGTKPDILWAPHQVDRFVVCDSELSLYHVESAVNSELKAGSLRLSEDSAATLLSINSDTPYMKCVAWYLNYDPECLLAVGQANGRVVLTSLGQDHNSKFKDLIGKEFVPKHARQCNTLAWNPLDSNWLAAGLDKHRADFSVLIWDICSKYTPDIVPMEKVRLSAGEAETTLLVTKPLYELGQNDASLSLCWLPRDQKLLLAGMHRNLAIFDLRNTSQKMFVNTKAVQGVTVDPYFHDRVASFYEGQVAIWDLRKFEKPVLTLTEQPKPLTKVAWCPTRTGLLATLTRDSNIIRLYDMQHTPTPIGDETEPTIIERSVQPCDNYIASFAWHPTSQNRMIVVTPNRTMSDFTVFERISLAWSPITSLMWACGRHLYECAEEESDNSLEKDIATKMRLRALSRYGLDTEQVWRNHILAGNEDPQLKSLWYTLHFMKQYTEDNDQKSPGNKGSLVYAGIKSIVKSSLGMVESSRHNWSGLDKQTDIQNLNEERILALQLCGWIKKGTDVDVGPFLNSLVQEGEWERAAAVALFNLDIRRAIQILNEGASSEKGDLNLNVVAMALSGYTDEKNSLWREMCSTLRLQLNNPYLCVMFAFLTSEAGAYDGVLYENKVAVRDRVAFACKFLGDAQLNKYIEKLTNEMKEAGNLEGILLTGLTKDGVDLMESYVDRTGDVQTASYCMLQGSPLDVLKDERVQYWIENYRNLLDAWRFWHKRAEFDIHRSKLDPSSKPLAQVFVSCNFCGKSISYSCSSVPHQGRGFSQYGVSGSPTKSKVTSCPGCRKPLPRCALCLINMGTPVSSCPGGSKSDEKVDLSKDKKLAQFNNWFTWCHNCRHGGHAGHMLSWFRDHAECPVSACTCKCMQLDTTGNLVPAETVQP.

WD repeat units lie at residues 58–100 (SDTP…NSKF), 111–155 (KHAR…TPDI), 182–221 (GQND…QKMF), 223–261 (NTKA…KPVL), 265–306 (EQPK…TPIG), 320–360 (PCDN…SLAW), and 395–437 (RLRA…KQYT). A C4-type zinc finger spans residues 735-781 (VSCNFCGKSISYSCSSVPHQGRGFSQYGVSGSPTKSKVTSCPGCRKP). Residues Cys737 and Cys740 each contribute to the Zn(2+) site. Residues Ser759 and Ser766 each carry the phosphoserine modification. 11 residues coordinate Zn(2+): Cys775, Cys778, Cys788, Cys827, Cys830, His832, His835, His838, Cys849, Cys854, and Cys858. The RING-type; atypical zinc-finger motif lies at 782 to 863 (LPRCALCLIN…CTCKCMQLDT (82 aa)).

Belongs to the WD repeat mio family. As to quaternary structure, component of the GATOR2 subcomplex, composed of MIOS, SEC13, SEH1L, WDR24 and WDR59. The GATOR2 complex interacts with CASTOR1 and CASTOR2; the interaction is negatively regulated by arginine. CASTOR1 and CASTOR2 convey leucine availability via direct interaction with MIOS. The GATOR2 complex interacts with SESN1, SESN2 and SESN3; the interaction is negatively regulated by amino acids. Interacts with SAR1A and SAR1B; the interaction is direct, disrupted by leucine and mediates the interaction of SAR1A or SAR1B with the GATOR2 complex to negatively regulate the TORC1 signaling upon leucine deprivation. Widely expressed. In brain, expressed in neurons and glia (oligodendrocytes and astrocytes), with more abundance in neurons.

It localises to the lysosome membrane. The GATOR2 complex is negatively regulated by the upstream amino acid sensors CASTOR1 and SESN2, which sequester the GATOR2 complex in absence of amino acids. In the presence of abundant amino acids, GATOR2 is released from CASTOR1 and SESN2 and activated. Functionally, as a component of the GATOR2 complex, functions as an activator of the amino acid-sensing branch of the mTORC1 signaling pathway. The GATOR2 complex indirectly activates mTORC1 through the inhibition of the GATOR1 subcomplex. GATOR2 probably acts as an E3 ubiquitin-protein ligase toward GATOR1. In the presence of abundant amino acids, the GATOR2 complex mediates ubiquitination of the NPRL2 core component of the GATOR1 complex, leading to GATOR1 inactivation. In the absence of amino acids, GATOR2 is inhibited, activating the GATOR1 complex. Within the GATOR2 complex, MIOS is required to prevent autoubiquitination of WDR24, the catalytic subunit of the complex. The GATOR2 complex is required for brain myelination. This chain is GATOR2 complex protein MIOS, found in Mus musculus (Mouse).